The following is a 126-amino-acid chain: L-alanine exporter AlaE (126 aa).

A helical membrane pass occupies residues 23-43; the sequence is FALVVYCFFTGMAIEILLSGM.

The protein belongs to the AlaE exporter family.

Its subcellular location is the cell inner membrane. In terms of biological role, exports L-alanine. This Sodalis glossinidius (strain morsitans) protein is L-alanine exporter AlaE.